We begin with the raw amino-acid sequence, 141 residues long: Period circadian protein (141 aa).

Residues 1-141 form a disordered region; it reads EGSGGSGSSG…VTLTESLLNK (141 aa). The segment covering 11 to 23 has biased composition (polar residues); it reads HFTTGSNVHMSSV. Residues 29–68 show a composition bias toward gly residues; it reads GGTGGTGTGTGTGTGTGTGTGTGTGTGTGTGTGTGTGTGT. 19 tandem repeats follow at residues 30–31, 33–34, 35–36, 37–38, 39–40, 41–42, 43–44, 45–46, 47–48, 49–50, 51–52, 53–54, 55–56, 57–58, 59–60, 61–62, 63–64, 65–66, and 67–68. The segment at 30 to 94 is 32 X 2 AA approximate tandem repeats of G-T; it reads GTGGTGTGTG…ANGTGTGKGT (65 aa). One copy of the 20; approximate repeat lies at 69–70; sequence AS. Low complexity predominate over residues 69 to 85; sequence ASGTATGTASGTATGTA. Repeat unit 21 spans residues 71–72; that stretch reads GT. Residues 73–74 form a 22; approximate repeat; the sequence is AT. Repeat unit 23 spans residues 75 to 76; the sequence is GT. Residues 77–78 form a 24; approximate repeat; that stretch reads AS. Repeat unit 25 spans residues 79–80; sequence GT. Residues 81 to 82 form a 26; approximate repeat; that stretch reads AT. Repeat unit 27 spans residues 83–84; it reads GT. One copy of the 28; approximate repeat lies at 85 to 86; that stretch reads AN. 2 tandem repeats follow at residues 87–88 and 89–90. A 31; approximate repeat occupies 91-92; sequence GK. Repeat unit 32 spans residues 93-94; the sequence is GT. The segment covering 101-113 has biased composition (gly residues); the sequence is SGSGSGTGTGTGT. Over residues 114-129 the composition is skewed to low complexity; the sequence is GTTTTTTTGNNSSSST. Positions 130–141 are enriched in polar residues; it reads PPVTLTESLLNK.

Forms a heterodimer with timeless (TIM); the complex then translocates into the nucleus. In terms of processing, phosphorylated with a circadian rhythmicity, probably by the double-time protein (dbt). Phosphorylation could be implicated in the stability of per monomer and in the formation of heterodimer per-tim.

The protein localises to the nucleus. The protein resides in the cytoplasm. It localises to the perinuclear region. Essential for biological clock functions. Determines the period length of circadian and ultradian rhythms; an increase in PER dosage leads to shortened circadian rhythms and a decrease leads to lengthened circadian rhythms. Essential for the circadian rhythmicity of locomotor activity, eclosion behavior, and for the rhythmic component of the male courtship song that originates in the thoracic nervous system. The biological cycle depends on the rhythmic formation and nuclear localization of the TIM-PER complex. Light induces the degradation of TIM, which promotes elimination of PER. Nuclear activity of the heterodimer coordinatively regulates PER and TIM transcription through a negative feedback loop. Behaves as a negative element in circadian transcriptional loop. Does not appear to bind DNA, suggesting indirect transcriptional inhibition. This chain is Period circadian protein (per), found in Drosophila serrata (Fruit fly).